The following is a 66-amino-acid chain: Large ribosomal subunit protein bL33c (66 aa).

Belongs to the bacterial ribosomal protein bL33 family.

It localises to the plastid. The protein localises to the chloroplast. In Oenothera argillicola (Appalachian evening primrose), this protein is Large ribosomal subunit protein bL33c.